A 346-amino-acid polypeptide reads, in one-letter code: Sensor histidine kinase GraS (346 aa).

2 helical membrane passes run 15 to 35 (MNWI…SLID) and 43 to 63 (LFYI…LTYF). The region spanning 126–332 (EFVHDIKTPV…TVRLIFPLQN (207 aa)) is the Histidine kinase domain.

Interacts with GraX.

It localises to the cell membrane. The catalysed reaction is ATP + protein L-histidine = ADP + protein N-phospho-L-histidine.. In terms of biological role, member of the two-component regulatory system GraR/GraS involved in resistance against cationic antimicrobial peptides (CAMPs). Functions as a sensor protein kinase which phosphorylates GraR through the auxiliary protein GraX. In turn, GraR up-regulates many genes such as adhesins, exoproteins, transporters, toxins, and proteins involved in cell wall synthesis. Down-regulates the expression of many genes involved in RNA and amino acid synthesis or glycolysis. This is Sensor histidine kinase GraS (graS) from Staphylococcus aureus (strain Mu50 / ATCC 700699).